The following is a 38-amino-acid chain: Toxic protein TimP (38 aa).

A membrane pass occupies residues 1 to 20 (MKVRCFCVVLLVSGTLCLHA).

This sequence belongs to the TimP toxin family.

The protein localises to the cell inner membrane. Its function is as follows. Toxic component of a probable type I toxin-antitoxin (TA) system. Neutralized by sRNA antitoxin TimR which binds to the 5' UTR of timP mRNA and inhibits translation. When TimP is expressed from its promoter in the absence of antitoxin leads to mild cell stress; overexpression in situ is toxic to the cell and causes membrane leakage. The antitoxin gene is encoded immediately upstream and transcribed divergently from the toxin gene; antitoxin RNA is less stable than timP mRNA. The protein is Toxic protein TimP of Salmonella typhimurium (strain SL1344).